The sequence spans 219 residues: MEKAEAAAVVIPLSVSNPSYRGSGMSDQEVSEEQSAGDAWVSAAMAAAEAVAAAATSTGIDNTNDYTYTAASENGDPGFTLGDNTYGPNGAASGCPSPPSPEVVGLEMVVVSSLAPEIAAAVPADTISASAAAPATRVDDGNAPLLGPGQAQDYDSESGCYYSESDNETASMFIRRVGRRQARRHRRRRVALTVAGVILVVVLCAISGIVGAFLARVFP.

Residues 1 to 193 lie on the Intravirion side of the membrane; it reads MEKAEAAAVV…RHRRRRVALT (193 aa). The Di-leucine internalization motif motif lies at 145 to 146; that stretch reads LL. Positions 153–168 are acidic; sequence DYDSESGCYYSESDNE. 2 positions are modified to phosphoserine; by host CK2: Ser-163 and Ser-165. A helical; Signal-anchor for type II membrane protein transmembrane segment spans residues 194-214; it reads VAGVILVVVLCAISGIVGAFL. Residues 215–219 are Virion surface-facing; it reads ARVFP.

This sequence belongs to the alphaherpesvirinae envelope protein US9 family. Phosphorylated on serines within the acidic cluster. Phosphorylation determines whether endocytosed viral US9 traffics to the trans-Golgi network or recycles to the cell membrane.

Its subcellular location is the virion membrane. The protein resides in the host Golgi apparatus membrane. It localises to the host smooth endoplasmic reticulum membrane. It is found in the host cell membrane. Essential for the anterograde spread of the infection throughout the host nervous system. Together with the gE/gI heterodimer, US9 is involved in the sorting and transport of viral structural components toward axon tips. The sequence is that of Envelope protein US9 homolog from Equine herpesvirus 1 (strain Kentucky A) (EHV-1).